A 422-amino-acid chain; its full sequence is tRNA hydroxylation protein P (422 aa).

Positions methionine 1–alanine 58 are cleaved as a signal peptide.

The protein belongs to the peptidase U32 family.

Its function is as follows. Involved in prephenate-dependent formation of 5-hydroxyuridine (ho5U) modification at position 34 in tRNAs, the first step in 5-carboxymethoxyuridine (cmo5U) biosynthesis. The protein is tRNA hydroxylation protein P of Helicobacter pylori (strain J99 / ATCC 700824) (Campylobacter pylori J99).